A 139-amino-acid polypeptide reads, in one-letter code: MKPAARRRARECAVQALYSWQLSKNDIADVEHQFLSEQDVKDVDITYFRELLAGVATQAEKLDQLMAPFLSRQIEELGQVEKAILRLAMFELSKREDVPYKVAINEAIELAKVFGAEDSHKFVNGVLDKAAPSVRKGKK.

Belongs to the NusB family.

Involved in transcription antitermination. Required for transcription of ribosomal RNA (rRNA) genes. Binds specifically to the boxA antiterminator sequence of the ribosomal RNA (rrn) operons. This Pectobacterium carotovorum subsp. carotovorum (strain PC1) protein is Transcription antitermination protein NusB.